The chain runs to 35 residues: Mu-theraphotoxin-Pm1a (35 aa).

3 disulfide bridges follow: Cys-3-Cys-17, Cys-10-Cys-22, and Cys-16-Cys-29. Phe-35 carries the phenylalanine amide modification.

The protein belongs to the neurotoxin 10 (Hwtx-1) family. 62 (Vatx) subfamily. As to expression, expressed by the venom gland.

The protein localises to the secreted. Functionally, gating-modifier toxin with weak activity on Nav1.7/SCN9A and Nav1.8/SCN10A. Inhibits Nav1.7/SCN9A peak current (IC(50)=334 nM) and shifts the voltage dependence of activation to more depolarised membrane potentials. Shows 21% peak current inhibition (at 10 uM) on Nav1.8/SCN10A sodium channels. In Poecilotheria metallica (Metallic blue ornamental tree spider), this protein is Mu-theraphotoxin-Pm1a.